The following is a 794-amino-acid chain: Protein sel-1 homolog 1 (794 aa).

A signal peptide spans 1 to 21 (MQVRVRLLLLLCAVLLGSAAA). The interaction with ERLEC1, OS9 and SYVN1 stretch occupies residues 22–737 (SSDEETNQDE…DLFTQLDMDQ (716 aa)). Over 22–738 (SSDEETNQDE…LFTQLDMDQL (717 aa)) the chain is Lumenal. Acidic residues predominate over residues 23–32 (SDEETNQDES). Disordered stretches follow at residues 23-46 (SDEETNQDESLDSKGALPTDGSVK) and 73-105 (QDEEESSKSQEEVSVTEDISFLDSPNPSSKTYE). One can recognise a Fibronectin type-II domain in the interval 122-170 (AHGEPCHFPFLFLDKEYDECTSDGREDGRLWCATTYDYKTDEKWGFCET). Cystine bridges form between Cys127–Cys153 and Cys141–Cys168. 9 Sel1-like repeats span residues 183–218 (AEAIYQSGMKILNGSTRKNQKREAYRYLQKAAGMNH), 219–254 (TKALERVSYALLFGDYLTQNIQAAKEMFEKLTEEGS), 255–290 (PKGQTGLGFLYASGLGVNSSQAKALVYYTFGALGGN), 291–326 (LIAHMVLGYRYWAGIGVLQSCESALTHYRLVANHVA), 373–409 (VQAQVGLGQLHLHGGRGVEQNHQRAFDYFNLAANAGN), 410–446 (SHAMAFLGKMYSEGSDIVPQSNETALHYFKKAADMGN), 447–482 (PVGQSGLGMAYLYGRGVQVNYDLALKYFQKAAEQGW), 483–518 (VDGQLQLGSMYYNGIGVKRDYKQALKYFNLASQGGH), and 519–554 (ILAFYNLAQMHASGTGVMRSCHTAVELFKNVCERGR). Asn195 and Asn217 each carry an N-linked (GlcNAc...) asparagine glycan. Residue Asn272 is glycosylated (N-linked (GlcNAc...) asparagine). Positions 352-537 (NSGMLEEDLI…MHASGTGVMR (186 aa)) are important for homodimerization and oligomerization. The N-linked (GlcNAc...) asparagine glycan is linked to Asn431. N-linked (GlcNAc...) asparagine glycosylation is present at Asn608. 2 Sel1-like repeats span residues 627-662 (TVARIKLGDYHFYGFGTDVDYETAFIHYRLASEQQH) and 664-699 (AQAMFNLGYMHEKGLGIKQDIHLAKRFYDMAAEASP). Residues 643 to 723 (TDVDYETAFI…VVYFLQYIRE (81 aa)) form an interaction with SYVN1 region. The tract at residues 738-794 (LLGPEWDLYLMTIIALLLGTVIAYRQRQHQDIPVPRPPGPRPAPPQQEGPPEQQPPQ) is mediates retention in the endoplasmic reticulum. Residues 739 to 759 (LGPEWDLYLMTIIALLLGTVI) form a helical membrane-spanning segment. Over 760–794 (AYRQRQHQDIPVPRPPGPRPAPPQQEGPPEQQPPQ) the chain is Cytoplasmic. The disordered stretch occupies residues 767-794 (QDIPVPRPPGPRPAPPQQEGPPEQQPPQ). A compositionally biased stretch (pro residues) spans 771-794 (VPRPPGPRPAPPQQEGPPEQQPPQ).

It belongs to the sel-1 family. In terms of assembly, homodimer and homooligomer. May form a complex with ERLEC1, HSPA5, OS9, and SYVN1. Interacts with FOXRED2 and EDEM1. Interacts with LPL and LMF1; may stabilize the complex formed by LPL and LMF1 and thereby promote the export of LPL dimers. Component of the HRD1 complex, which comprises at least SYNV1/HRD1, DERL1/2, FAM8A1, HERPUD1/HERP, OS9, SEL1L and UBE2J1. SYNV1 assembles with SEL1L and FAM8A1 through its transmembrane domains, but interaction with its cytoplasmic domain is required to confer stability to FAM8A1 and enhance recruitment of HERPUD1. The interaction with SYNV1/HRD1 is direct. In terms of processing, N-glycosylated.

The protein resides in the endoplasmic reticulum membrane. Functionally, plays a role in the endoplasmic reticulum quality control (ERQC) system also called ER-associated degradation (ERAD) involved in ubiquitin-dependent degradation of misfolded endoplasmic reticulum proteins. Enhances SYVN1 stability. Plays a role in LPL maturation and secretion. Required for normal differentiation of the pancreas epithelium, and for normal exocrine function and survival of pancreatic cells. May play a role in Notch signaling. In Rattus norvegicus (Rat), this protein is Protein sel-1 homolog 1 (Sel1l).